The following is a 168-amino-acid chain: Peptidoglycan-associated lipoprotein (168 aa).

The signal sequence occupies residues 1–21; it reads MEMLKFGKFAALALAMAVAVG. The N-palmitoyl cysteine moiety is linked to residue cysteine 22. Cysteine 22 is lipidated: S-diacylglycerol cysteine. The region spanning 56-168 is the OmpA-like domain; sequence SDEAALRAIT…AQNRRVELKK (113 aa). A disordered region spans residues 147–168; that stretch reads RPVATGHDEQSWAQNRRVELKK.

This sequence belongs to the Pal lipoprotein family. As to quaternary structure, the Tol-Pal system is composed of five core proteins: the inner membrane proteins TolA, TolQ and TolR, the periplasmic protein TolB and the outer membrane protein Pal. They form a network linking the inner and outer membranes and the peptidoglycan layer.

It localises to the cell outer membrane. Its function is as follows. Part of the Tol-Pal system, which plays a role in outer membrane invagination during cell division and is important for maintaining outer membrane integrity. This Pseudomonas aeruginosa (strain ATCC 15692 / DSM 22644 / CIP 104116 / JCM 14847 / LMG 12228 / 1C / PRS 101 / PAO1) protein is Peptidoglycan-associated lipoprotein.